The chain runs to 410 residues: MAREKFERKKPHINIGTIGHVDHGKTTLTAAITMALAVGTGKSGKRYDEIDAAPEEKARGITINTAHVEYETETRHYAHVDCPGHADYVKNMITGAAQMDGAILVVSGADGPMPQTKEHILLAKQVGVPNMVVFLNKEDQVDDPELLELVELEVRETLNSYDFPGDEIPVVAGSALMALEALTQDSKLARGSNPWVDKIYALMDQVDKYIPTPQRDTDKPFLMAIEDVFSITGRGTVATGRVERGKVVVGENVDIVGLANIPQNTTVTGLEMFQKTLEESVAGDNVGVLLRGIQKDQVERGMVLAKPNTIKPHIRFESEVYVLAKEEGGRHTPFFPGYRPQFYVRTTDVTGKIDSFKADDGSDTQMVMPGDRVKMVVSLIQPIAIEKGMRFAIREGGRTVGAGIVSEILE.

The region spanning 10-214 (KPHINIGTIG…QVDKYIPTPQ (205 aa)) is the tr-type G domain. Residues 19–26 (GHVDHGKT) form a G1 region. 19–26 (GHVDHGKT) is a binding site for GTP. Residue T26 participates in Mg(2+) binding. Residues 60–64 (GITIN) form a G2 region. Positions 81-84 (DCPG) are G3. Residues 81 to 85 (DCPGH) and 136 to 139 (NKED) each bind GTP. Positions 136 to 139 (NKED) are G4. The segment at 174 to 176 (SAL) is G5.

Belongs to the TRAFAC class translation factor GTPase superfamily. Classic translation factor GTPase family. EF-Tu/EF-1A subfamily.

The protein resides in the plastid. It is found in the chloroplast. It catalyses the reaction GTP + H2O = GDP + phosphate + H(+). GTP hydrolase that promotes the GTP-dependent binding of aminoacyl-tRNA to the A-site of ribosomes during protein biosynthesis. This Mesostigma viride (Green alga) protein is Elongation factor Tu, chloroplastic (tufA).